We begin with the raw amino-acid sequence, 195 residues long: Small ribosomal subunit protein eS1 (195 aa).

This sequence belongs to the eukaryotic ribosomal protein eS1 family.

The chain is Small ribosomal subunit protein eS1 from Methanothermobacter thermautotrophicus (strain ATCC 29096 / DSM 1053 / JCM 10044 / NBRC 100330 / Delta H) (Methanobacterium thermoautotrophicum).